Reading from the N-terminus, the 345-residue chain is Transcription factor 19 (345 aa).

Residues 31–88 enclose the FHA domain; it reads YRLGHRADLCDVALRPQQEPGLISGIHAELHAEPRGDDWRVSLEDHSLQGTLVNNVRL. Disordered stretches follow at residues 138–167 and 190–277; these read RSRG…STLS and LTFS…KYPV. The PHD-type zinc-finger motif lies at 293-342; it reads AAPCCCLPQEETVAWVQCDGCDVWFHVACVGCSIQAAREADFRCPGCRAG. Positions 296, 298, 310, 313, 318, 321, 336, and 339 each coordinate Zn(2+).

It is found in the nucleus. Its function is as follows. Potential transcription factor that may play a role in the regulation of genes involved in cell cycle G1/S transition. May bind to regulatory elements of genes, including the promoter of the transcription factor FOXO1. The protein is Transcription factor 19 (TCF19) of Macaca mulatta (Rhesus macaque).